The primary structure comprises 1516 residues: MDNQQDKAIVASANGENTLINGVKENDSEDQDVAMKSFAALEAAAPIQPTPVAQKETLMYPRGLLPLPSKKPCMQSPPSPLGLIEAPEHAANSASVNAISLTSGIAKGLNTWSLPNECEKAPFAIMEPAGMSALNGDCLMQPSRTCLGCFMESKDAVDPEPGISLKVGDLNRDYETCAVSDIGIQCINAGENMKYGEQLLSDQLLGFPLHKSRAGDRRETEKPDIDLEDPAQKSYYEALLLDKCNTEEALLANSNQDWGYFETFISESKIELLDLCSKNELSVNLFSEEDVDNYMFDDDESTLGSDVCSLKIRYESFQDNVRDKTTLLMQEDAQFNFFPSVFTTCPKRESKSGALKQSSDFSQFKVPDVSIIWGEEDKNLDKKKGKEEGQEDKGVEKKDGKDNGEKPALNKPCSGTEVEQLKNPKQGHLANSLETSGSFSDDSSFIEISYDAMGEIKDCSRYMARDTNSGSSSSQQNYGLRAKRKVRYSEDYLYDVDSLEGEKVNERKEWLPVGSKEEDDDEWCPKKRRKVTRKEPPVIIKYIIINRFKGEKNMLVKLGKVDASETTVNLSENQLNKYAKLAPLKGFWQKKKKQRNTNTDSIKTPFSQKQSFEPGSFEVSFLPPARKRKSKLGNRHRIQRIPSIEISASSKQISLCNDQRHASNHKEDGGLKGTLKSAPLGAPSCANGSHLNDITGPDSVKVKAQDTEFKGPERKVLNKIKFKSEARLKSKKVKAAGQESKPIVQMSPLLENQSSKANLKNEVIPGTSNSSRLSEFHEAKAAKSSTFLPTTCSSEMPLSSANVTTNIPVIPGGYLQTLLDASDLSNNTSISYFSHHSPEQNEGSLTQTEKSFVPLQPTQDCVLTSSSDSELQQSSHNFKMESSNYRNVWPNKATSGTQEFMAEVSREIAPTQSSEFGASQVVSMENNLTPTTYNPICLNSGGSNCNKVLYDSMQDTQLPSDDSYQLCHFNNGEICFPFQQGPVNMDDGRLFSFDSMAPLSVSSSNYCSLSLKSCEKDGDDDITDDFLAHCSPKLVIQQSIDEIAPLKESTDLLDISNFTPDKFRHSSLSEMSPPDTPSLSPQITRCESMKTLGTLKGFQEGVPGPLDSVEKIKWDCSTLSRQVQMEDGFTLNNHQFQFHMFNDEDSVSLLQKNPCLSTFNDPSGQISTNNKVSKSRKKSSPSKSGAMNQSSSQKNTRKKSLKGNNKGIEKPPGKNSRQVPKSTKKGKYMAAINGEKMQIGIGRGGSQTNTISSTGKTLAECIQHGGPMASMKMPSQKGLSGDWALGKESSPGWSDMSMGTNTNSLLDDDQREFQEPSYILSNIASGMADVQRFMMASIEPLWEPMEHHGDPNIFYSPESNSLKLKTLKILAGTPQESKKKINSGSQGATKNHRSIKGVSKSNGKTAIGDPGRANMPGYNEDSRSTFFDKKYSNMSTLGNNGPTHKKLYRHKSSSKALRDEKCKGKHMEREQVHKDESGTASFEKLRDSDYNLLKAETTFWVLPVFEEETRIFQKDI.

Basic and acidic residues predominate over residues 380–405; it reads LDKKKGKEEGQEDKGVEKKDGKDNGE. Disordered stretches follow at residues 380–440, 589–610, 1158–1225, 1373–1419, and 1437–1479; these read LDKK…GSFS, QKKK…SQKQ, TFND…STKK, TPQE…PGYN, and LGNN…ESGT. Composition is skewed to polar residues over residues 596–610, 1158–1170, and 1185–1194; these read NTNT…SQKQ, TFND…STNN, and GAMNQSSSQK. The segment covering 1443-1453 has biased composition (basic residues); the sequence is THKKLYRHKSS. Over residues 1456-1479 the composition is skewed to basic and acidic residues; the sequence is ALRDEKCKGKHMEREQVHKDESGT.

Highly expressed in fetal and adult brain, predominantly in the cerebral cortex and the cerebellum. Also expressed in other tissues but to a lesser extent.

The protein resides in the nucleus. It localises to the cytoplasm. Involved in neurite outgrowth by regulating cell-cell adhesion via the N-cadherin signaling pathway. May act by regulating expression of protein-coding genes, such as N-cadherins and integrin beta-1 (ITGB1). This chain is Neurite extension and migration factor, found in Homo sapiens (Human).